A 526-amino-acid polypeptide reads, in one-letter code: Exodeoxyribonuclease 7 large subunit (526 aa).

Residues 499 to 526 (AGEDGTPSQAPKKRPARAGEPTKQGSLF) form a disordered region.

Belongs to the XseA family. Heterooligomer composed of large and small subunits.

It is found in the cytoplasm. The enzyme catalyses Exonucleolytic cleavage in either 5'- to 3'- or 3'- to 5'-direction to yield nucleoside 5'-phosphates.. Bidirectionally degrades single-stranded DNA into large acid-insoluble oligonucleotides, which are then degraded further into small acid-soluble oligonucleotides. The sequence is that of Exodeoxyribonuclease 7 large subunit from Sinorhizobium medicae (strain WSM419) (Ensifer medicae).